The sequence spans 218 residues: MPLKDTVLHIRHLGRQDYESVWHAMQEYTDNRDETSRDELWIVEHPPVFTQGQAGKSEHILNPGDIPVIQVDRGGQVTYHGPGQLVAYPLLDIKRLKIGVRQLVTDIEQSIVKMLALYGIEAYPKADAPGVYVEERKIASLGLRIRKGCSFHGLALNVDMDMSPFQRINPCGYAGLEMAQCKPLKGPQSVEEAGEKLIQTFSQELGYQHLEHHQGLTD.

The BPL/LPL catalytic domain maps to 34 to 209 (ETSRDELWIV…TFSQELGYQH (176 aa)). Residues 73 to 80 (RGGQVTYH), 140 to 142 (SLG), and 153 to 155 (GLA) contribute to the substrate site. Residue C171 is the Acyl-thioester intermediate of the active site.

Belongs to the LipB family.

The protein localises to the cytoplasm. The enzyme catalyses octanoyl-[ACP] + L-lysyl-[protein] = N(6)-octanoyl-L-lysyl-[protein] + holo-[ACP] + H(+). The protein operates within protein modification; protein lipoylation via endogenous pathway; protein N(6)-(lipoyl)lysine from octanoyl-[acyl-carrier-protein]: step 1/2. Its function is as follows. Catalyzes the transfer of endogenously produced octanoic acid from octanoyl-acyl-carrier-protein onto the lipoyl domains of lipoate-dependent enzymes. Lipoyl-ACP can also act as a substrate although octanoyl-ACP is likely to be the physiological substrate. The chain is Octanoyltransferase from Shewanella loihica (strain ATCC BAA-1088 / PV-4).